The following is a 155-amino-acid chain: Medium/long-chain acyl-CoA thioesterase YigI (155 aa).

The protein belongs to the YigI thioesterase family.

The protein resides in the cytoplasm. It catalyses the reaction a fatty acyl-CoA + H2O = a fatty acid + CoA + H(+). It carries out the reaction a medium-chain fatty acyl-CoA + H2O = a medium-chain fatty acid + CoA + H(+). The catalysed reaction is a long-chain fatty acyl-CoA + H2O = a long-chain fatty acid + CoA + H(+). In terms of biological role, displays thioesterase activity against medium- to long-chain acyl-CoA substrates. Is involved in the thioesterase-dependent beta-oxidation pathway of (9Z,11E)-octadecadienoate (conjugated linoleic acid or CLA), along with TesB and FadM. The protein is Medium/long-chain acyl-CoA thioesterase YigI (yigI) of Shigella flexneri.